We begin with the raw amino-acid sequence, 234 residues long: Short neuropeptide F (234 aa).

Positions 1–22 are cleaved as a signal peptide; sequence MYRINLTTFTLLLVLAVGSLMS. Positions 23–56 are excised as a propeptide; sequence ESLHPSDGAINDLYEYLLQREYAAPVSYADHQIK. F69 and F101 each carry phenylalanine amide. W132 bears the Tryptophan amide mark. Phenylalanine amide is present on F165. A compositionally biased stretch (polar residues) spans 181–190; that stretch reads TTGQQAQPAN. Residues 181–234 form a disordered region; it reads TTGQQAQPANEASEKRAPTQRLRWGRSDPALAKDSSEDKALDVEESENTNADDK. W204 carries the tryptophan amide modification. Positions 207 to 234 are excised as a propeptide; that stretch reads SDPALAKDSSEDKALDVEESENTNADDK.

Belongs to the NPY family. In terms of tissue distribution, expressed in all body parts of larva, pupae and adults.

It is found in the secreted. Plays a role in controlling food intake and regulating body size. This chain is Short neuropeptide F, found in Anopheles gambiae (African malaria mosquito).